Here is a 620-residue protein sequence, read N- to C-terminus: Glutathione-regulated potassium-efflux system protein KefC (620 aa).

Helical transmembrane passes span 4–24 (HTLI…PVAV), 26–46 (LGLG…PWGL), 54–74 (AILH…GLEL), 86–106 (VFGG…GFCV), 114–134 (VALL…MQAM), 149–169 (FAVL…IPLL), 178–198 (ASAF…VVLL), 218–238 (VFSA…EEAG), 271–291 (LLLG…TLVA), 296–316 (VLTL…LVAK), 326–346 (RWFA…FGAA), and 359–379 (ALTL…VLLT). An RCK N-terminal domain is found at 399–518 (QPRVIIAGFG…AGVAQPERET (120 aa)). Positions 596-620 (HGWQGTREGKHTGNDADEPEVKPQP) are disordered.

The protein belongs to the monovalent cation:proton antiporter 2 (CPA2) transporter (TC 2.A.37) family. KefC subfamily. As to quaternary structure, homodimer. Interacts with the regulatory subunit KefF.

It localises to the cell inner membrane. In terms of biological role, pore-forming subunit of a potassium efflux system that confers protection against electrophiles. Catalyzes K(+)/H(+) antiport. The sequence is that of Glutathione-regulated potassium-efflux system protein KefC from Cronobacter sakazakii (strain ATCC BAA-894) (Enterobacter sakazakii).